Reading from the N-terminus, the 409-residue chain is MQIYKVGGAVRDRLLGKPVTDIDWVVVGATTEEMLAKGFRPVGADFPVFLHPKSGEEYALARTERKSGRGYGGFTFHASPEVTLEEDLIRRDLTINAMAEDDQQNLTDPYHGQRDLEERILRHVSPAFAEDPLRVLRVARFAARYAELGFKVAPETLELMRQLSESGELEALTAERSWKEISRALMEDQPQVFIQVLRDCGALKVLMPEVDALFGVPQPEAHHPEIDSGLHTLSVLEQSALHKQPLTVRWACLLHDLGKGLTPEEEWPRHIAHEHKGLKLIKAVNERFKAPKDCQELALLVGQYHTHGHRALELKASTLLELLQSFDVYRRPQRFEEFIVACEMDARGRKGLEQRSYPQADYLRGAANVARGVAVQPLLEKGFKGPELGEALKRERLKALKVYKESAAS.

2 residues coordinate ATP: Gly8 and Arg11. Gly8 and Arg11 together coordinate CTP. Residues Asp21 and Asp23 each contribute to the Mg(2+) site. ATP contacts are provided by Arg91, Arg137, and Arg140. Arg91, Arg137, and Arg140 together coordinate CTP. An HD domain is found at 228 to 329 (SGLHTLSVLE…LELLQSFDVY (102 aa)).

This sequence belongs to the tRNA nucleotidyltransferase/poly(A) polymerase family. Bacterial CCA-adding enzyme type 1 subfamily. As to quaternary structure, monomer. Can also form homodimers and oligomers. Requires Mg(2+) as cofactor. The cofactor is Ni(2+).

It catalyses the reaction a tRNA precursor + 2 CTP + ATP = a tRNA with a 3' CCA end + 3 diphosphate. It carries out the reaction a tRNA with a 3' CCA end + 2 CTP + ATP = a tRNA with a 3' CCACCA end + 3 diphosphate. Its function is as follows. Catalyzes the addition and repair of the essential 3'-terminal CCA sequence in tRNAs without using a nucleic acid template. Adds these three nucleotides in the order of C, C, and A to the tRNA nucleotide-73, using CTP and ATP as substrates and producing inorganic pyrophosphate. tRNA 3'-terminal CCA addition is required both for tRNA processing and repair. Also involved in tRNA surveillance by mediating tandem CCA addition to generate a CCACCA at the 3' terminus of unstable tRNAs. While stable tRNAs receive only 3'-terminal CCA, unstable tRNAs are marked with CCACCA and rapidly degraded. This is Multifunctional CCA protein from Pseudomonas fluorescens (strain Pf0-1).